We begin with the raw amino-acid sequence, 374 residues long: UPF0754 membrane protein SAR1937 (374 aa).

2 consecutive transmembrane segments (helical) span residues Leu-4 to Ile-24 and Ser-354 to Val-374.

The protein belongs to the UPF0754 family.

The protein localises to the cell membrane. In Staphylococcus aureus (strain MRSA252), this protein is UPF0754 membrane protein SAR1937.